Reading from the N-terminus, the 137-residue chain is Small ribosomal subunit protein uS11 (137 aa).

Positions 1 to 11 (MAKQAKAGAAR) are enriched in low complexity. The interval 1–32 (MAKQAKAGAARRPQRGRRRERKNVPRGQAHVQ) is disordered. Over residues 12-21 (RPQRGRRRER) the composition is skewed to basic residues.

This sequence belongs to the universal ribosomal protein uS11 family. As to quaternary structure, part of the 30S ribosomal subunit. Interacts with proteins S7 and S18. Binds to IF-3.

Functionally, located on the platform of the 30S subunit, it bridges several disparate RNA helices of the 16S rRNA. Forms part of the Shine-Dalgarno cleft in the 70S ribosome. The polypeptide is Small ribosomal subunit protein uS11 (Herpetosiphon aurantiacus (strain ATCC 23779 / DSM 785 / 114-95)).